The following is a 181-amino-acid chain: uncharacterized protein (181 aa).

A helical transmembrane segment spans residues 133 to 153; the sequence is MCVCVHVCACVYVCMCVLVCM.

It is found in the membrane. This is an uncharacterized protein from Homo sapiens (Human).